Here is a 333-residue protein sequence, read N- to C-terminus: Flotillin-like protein FloA (333 aa).

The chain crosses the membrane as a helical span at residues Ile9 to Phe29.

The protein belongs to the flotillin-like FloA family. As to quaternary structure, homooligomerizes.

It localises to the cell membrane. The protein localises to the membrane raft. In terms of biological role, found in functional membrane microdomains (FMM) that may be equivalent to eukaryotic membrane rafts. FMMs are highly dynamic and increase in number as cells age. Flotillins are thought to be important factors in membrane fluidity. This Bacteroides thetaiotaomicron (strain ATCC 29148 / DSM 2079 / JCM 5827 / CCUG 10774 / NCTC 10582 / VPI-5482 / E50) protein is Flotillin-like protein FloA.